The following is a 396-amino-acid chain: Elongation factor Tu (396 aa).

Positions 10–206 (KPHVNVGTIG…ALDTYIPEPE (197 aa)) constitute a tr-type G domain. The segment at 19 to 26 (GHVDHGKT) is G1. A GTP-binding site is contributed by 19–26 (GHVDHGKT). Position 26 (Thr26) interacts with Mg(2+). Residues 60-64 (GITIN) are G2. The tract at residues 81–84 (DCPG) is G3. Residues 81 to 85 (DCPGH) and 136 to 139 (NKAD) contribute to the GTP site. The G4 stretch occupies residues 136 to 139 (NKAD). Positions 174 to 176 (SAL) are G5.

The protein belongs to the TRAFAC class translation factor GTPase superfamily. Classic translation factor GTPase family. EF-Tu/EF-1A subfamily. In terms of assembly, monomer.

The protein localises to the cytoplasm. It carries out the reaction GTP + H2O = GDP + phosphate + H(+). Functionally, GTP hydrolase that promotes the GTP-dependent binding of aminoacyl-tRNA to the A-site of ribosomes during protein biosynthesis. The chain is Elongation factor Tu from Thiobacillus denitrificans (strain ATCC 25259 / T1).